The sequence spans 428 residues: CinA-like protein (428 aa).

This sequence belongs to the CinA family.

This Chlorobium phaeovibrioides (strain DSM 265 / 1930) (Prosthecochloris vibrioformis (strain DSM 265)) protein is CinA-like protein.